Reading from the N-terminus, the 396-residue chain is E3 ubiquitin-protein transferase MAEA (396 aa).

Positions 1 to 124 (MAVQESAAQL…AAASVWKRKR (124 aa)) are extracellular and involved in cell to cell contact. Thr-28 carries the post-translational modification Phosphothreonine. Residues 121–153 (KRKRMDRMMVEHLLRCGYYNTAVKLARQSGIED) form the LisH domain. Positions 159–216 (MFLTAKEVEESLERRETATCLAWCHDNKSRLRKMKSCLEFSLRIQEFIELIRQNKRLD) constitute a CTLH domain. Residues 314–381 (CPVCSRSLNK…QDDKVVCPRT (68 aa)) form an RING-Gid-type zinc finger.

As to quaternary structure, identified in the CTLH complex that contains GID4, RANBP9 and/or RANBP10, MKLN1, MAEA, RMND5A (or alternatively its paralog RMND5B), GID8, ARMC8, WDR26 and YPEL5. Within this complex, MAEA, RMND5A (or alternatively its paralog RMND5B), GID8, WDR26, and RANBP9 and/or RANBP10 form the catalytic core, while GID4, MKLN1, ARMC8 and YPEL5 have ancillary roles. Interacts with F-actin. In terms of processing, autoubiquitinated as component of the CTLH E3 ubiquitin-protein ligase complex (in vitro).

The protein resides in the cytoplasm. It localises to the nucleus. Its subcellular location is the nucleoplasm. It is found in the nucleus matrix. The protein localises to the cell membrane. The protein resides in the cytoskeleton. It catalyses the reaction S-ubiquitinyl-[E2 ubiquitin-conjugating enzyme]-L-cysteine + [acceptor protein]-L-lysine = [E2 ubiquitin-conjugating enzyme]-L-cysteine + N(6)-ubiquitinyl-[acceptor protein]-L-lysine.. Its function is as follows. Core component of the CTLH E3 ubiquitin-protein ligase complex that selectively accepts ubiquitin from UBE2H and mediates ubiquitination and subsequent proteasomal degradation of the transcription factor HBP1. MAEA and RMND5A are both required for catalytic activity of the CTLH E3 ubiquitin-protein ligase complex. MAEA is required for normal cell proliferation. The CTLH E3 ubiquitin-protein ligase complex is not required for the degradation of enzymes involved in gluconeogenesis, such as FBP1. Plays a role in erythroblast enucleation during erythrocyte maturation and in the development of mature macrophages. Mediates the attachment of erythroid cell to mature macrophages; this MAEA-mediated contact inhibits erythroid cell apoptosis. Participates in erythroblastic island formation, which is the functional unit of definitive erythropoiesis. Associates with F-actin to regulate actin distribution in erythroblasts and macrophages. May contribute to nuclear architecture and cells division events. The protein is E3 ubiquitin-protein transferase MAEA (MAEA) of Pongo abelii (Sumatran orangutan).